The sequence spans 240 residues: UDP-2,3-diacylglucosamine hydrolase (240 aa).

Positions 8, 10, 41, 78, and 113 each coordinate Mn(2+). 78 to 79 (NR) contributes to the substrate binding site. Asp121, Ser159, Asn163, Lys166, and His194 together coordinate substrate. Positions 194 and 196 each coordinate Mn(2+).

It belongs to the LpxH family. Mn(2+) is required as a cofactor.

The protein resides in the cell inner membrane. The enzyme catalyses UDP-2-N,3-O-bis[(3R)-3-hydroxytetradecanoyl]-alpha-D-glucosamine + H2O = 2-N,3-O-bis[(3R)-3-hydroxytetradecanoyl]-alpha-D-glucosaminyl 1-phosphate + UMP + 2 H(+). The protein operates within glycolipid biosynthesis; lipid IV(A) biosynthesis; lipid IV(A) from (3R)-3-hydroxytetradecanoyl-[acyl-carrier-protein] and UDP-N-acetyl-alpha-D-glucosamine: step 4/6. Its function is as follows. Hydrolyzes the pyrophosphate bond of UDP-2,3-diacylglucosamine to yield 2,3-diacylglucosamine 1-phosphate (lipid X) and UMP by catalyzing the attack of water at the alpha-P atom. Involved in the biosynthesis of lipid A, a phosphorylated glycolipid that anchors the lipopolysaccharide to the outer membrane of the cell. The polypeptide is UDP-2,3-diacylglucosamine hydrolase (Shewanella baltica (strain OS185)).